Here is a 293-residue protein sequence, read N- to C-terminus: 1D-myo-inositol 2-acetamido-2-deoxy-alpha-D-glucopyranoside deacetylase 2 (293 aa).

Zn(2+) contacts are provided by histidine 6, aspartate 9, and histidine 142.

This sequence belongs to the MshB deacetylase family. It depends on Zn(2+) as a cofactor.

It catalyses the reaction 1D-myo-inositol 2-acetamido-2-deoxy-alpha-D-glucopyranoside + H2O = 1D-myo-inositol 2-amino-2-deoxy-alpha-D-glucopyranoside + acetate. In terms of biological role, catalyzes the deacetylation of 1D-myo-inositol 2-acetamido-2-deoxy-alpha-D-glucopyranoside (GlcNAc-Ins) in the mycothiol biosynthesis pathway. The polypeptide is 1D-myo-inositol 2-acetamido-2-deoxy-alpha-D-glucopyranoside deacetylase 2 (Frankia alni (strain DSM 45986 / CECT 9034 / ACN14a)).